Consider the following 1308-residue polypeptide: Receptor tyrosine-protein kinase erbB-4 (1308 aa).

Residues methionine 1 to serine 25 form the signal peptide. Over glutamine 26–leucine 652 the chain is Extracellular. Cysteine 29 and cysteine 56 are joined by a disulfide. Asparagine 138, asparagine 174, and asparagine 181 each carry an N-linked (GlcNAc...) asparagine glycan. Disulfide bonds link cysteine 156-cysteine 186, cysteine 189-cysteine 197, cysteine 193-cysteine 205, cysteine 213-cysteine 221, cysteine 217-cysteine 229, cysteine 230-cysteine 238, cysteine 234-cysteine 246, cysteine 249-cysteine 258, cysteine 262-cysteine 289, cysteine 293-cysteine 304, cysteine 308-cysteine 323, and cysteine 326-cysteine 330. An N-linked (GlcNAc...) asparagine glycan is attached at asparagine 253. Asparagine 410, asparagine 473, and asparagine 495 each carry an N-linked (GlcNAc...) asparagine glycan. 10 disulfide bridges follow: cysteine 503–cysteine 512, cysteine 507–cysteine 520, cysteine 523–cysteine 532, cysteine 536–cysteine 552, cysteine 555–cysteine 569, cysteine 559–cysteine 577, cysteine 580–cysteine 589, cysteine 593–cysteine 614, cysteine 617–cysteine 625, and cysteine 621–cysteine 633. Asparagine 548 is a glycosylation site (N-linked (GlcNAc...) asparagine). A glycan (N-linked (GlcNAc...) asparagine) is linked at asparagine 576. A glycan (N-linked (GlcNAc...) asparagine) is linked at asparagine 620. A membrane pass occupies residues isoleucine 653 to valine 673. The Cytoplasmic segment spans residues tyrosine 674 to valine 1308. The Nuclear localization signal signature appears at arginine 676 to arginine 684. Positions leucine 718 to leucine 985 constitute a Protein kinase domain. ATP-binding positions include leucine 724–valine 732, lysine 751, glutamine 797–methionine 799, and aspartate 843–asparagine 848. Aspartate 843 functions as the Proton acceptor in the catalytic mechanism. A phosphotyrosine; by autocatalysis mark is found at tyrosine 875, tyrosine 1035, and tyrosine 1056. Positions proline 1032–tyrosine 1035 match the PPxy motif 1 motif. The disordered stretch occupies residues proline 1117–glycine 1149. Phosphotyrosine; by autocatalysis occurs at positions 1150, 1162, 1188, 1202, 1242, 1258, and 1284. Residues proline 1282–leucine 1285 carry the PPxY motif 2 motif. Residues leucine 1290–proline 1292 carry the PDZ-binding motif.

It belongs to the protein kinase superfamily. Tyr protein kinase family. EGF receptor subfamily. As to quaternary structure, monomer in the absence of bound ligand. Homodimer or heterodimer with another ERBB family member upon ligand binding, thus forming heterotetramers. Interacts with EGFR and ERBB2. Interacts with DLG2 (via its PDZ domain), DLG3 (via its PDZ domain), DLG4 (via its PDZ domain) and SNTB2 (via its PDZ domain). Interacts with MUC1. Interacts (via its PPxy motifs) with WWOX. Interacts (via the PPxY motif 3 of isoform JM-A CYT-2) with YAP1 (via the WW domain 1 of isoform 1). Interacts (isoform JM-A CYT-1 and isoform JM-B CYT-1) with WWP1. Interacts (via its intracellular domain) with TRIM28. Interacts (via the intracellular domains of both CYT-1 and CYT-2 isoforms) with KAP1; the interaction does not phosphorylate KAP1 but represses ERBB4-mediated transcriptional activity. Interacts with PRPU, DDX23, MATR3, RBM15, ILF3, KAP1, U5S1, U2SURP, ITCH, HNRNPU, AP2A1, NULC, LEO1, WWP2, IGHG1, HXK1, GRB7 and SRRT. Interacts (phosphorylated isoform JM-A CYT-1 and isoform JM-B CYT-1) with PIK3R1. Interacts with SHC1. Interacts with GRB2. Interacts (soluble intracellular domain) with BCL2. Interacts (phosphorylated) with STAT1. Interacts with CBFA2T3. Interacts (soluble intracellular domain) with STAT5A. Post-translationally, isoform JM-A CYT-1 and isoform JM-A CYT-2 are processed by ADAM17. Proteolytic processing in response to ligand or 12-O-tetradecanoylphorbol-13-acetate stimulation results in the production of 120 kDa soluble receptor forms and intermediate membrane-anchored 80 kDa fragments (m80HER4), which are further processed by a presenilin-dependent gamma-secretase to release a cytoplasmic intracellular domain (E4ICD; E4ICD1/s80Cyt1 or E4ICD2/s80Cyt2, depending on the isoform). Membrane-anchored 80 kDa fragments of the processed isoform JM-A CYT-1 are more readily degraded by the proteasome than fragments of isoform JM-A CYT-2, suggesting a prevalence of E4ICD2 over E4ICD1. Isoform JM-B CYT-1 and isoform JM-B CYT-2 lack the ADAM17 cleavage site and are not processed by ADAM17, precluding further processing by gamma-secretase. In terms of processing, autophosphorylated on tyrosine residues in response to ligand binding. Autophosphorylation occurs in trans, i.e. one subunit of the dimeric receptor phosphorylates tyrosine residues on the other subunit. Ligands trigger phosphorylation at specific tyrosine residues, thereby creating binding sites for scaffold proteins and effectors. Constitutively phosphorylated at a basal level when overexpressed in heterologous systems; ligand binding leads to increased phosphorylation. Phosphorylation at Tyr-1035 is important for interaction with STAT1. Phosphorylation at Tyr-1056 is important for interaction with PIK3R1. Phosphorylation at Tyr-1242 is important for interaction with SHC1. Phosphorylation at Tyr-1188 may also contribute to the interaction with SHC1. Isoform JM-A CYT-2 is constitutively phosphorylated on tyrosine residues in a ligand-independent manner. E4ICD2 but not E4ICD1 is phosphorylated on tyrosine residues. Ubiquitinated. During mitosis, the ERBB4 intracellular domain is ubiquitinated by the APC/C complex and targeted to proteasomal degradation. Isoform JM-A CYT-1 and isoform JM-B CYT-1 are ubiquitinated by WWP1. The ERBB4 intracellular domain (E4ICD1) is ubiquitinated, and this involves NEDD4. In terms of tissue distribution, isoform JM-A CYT-2 and isoform JM-B CYT-2 are expressed in cerebellum, cerebral cortex, spinal cord, medulla oblongata and eye, but the kidney expresses solely isoform JM-A CYT-2 and the heart solely isoform JM-B CYT-2.

It is found in the cell membrane. The protein localises to the nucleus. It localises to the mitochondrion. It carries out the reaction L-tyrosyl-[protein] + ATP = O-phospho-L-tyrosyl-[protein] + ADP + H(+). With respect to regulation, binding of a cognate ligand leads to dimerization and activation by autophosphorylation on tyrosine residues. In vitro kinase activity is increased by Mg(2+). In terms of biological role, tyrosine-protein kinase that plays an essential role as cell surface receptor for neuregulins and EGF family members and regulates development of the heart, the central nervous system and the mammary gland, gene transcription, cell proliferation, differentiation, migration and apoptosis. Required for normal cardiac muscle differentiation during embryonic development, and for postnatal cardiomyocyte proliferation. Required for normal development of the embryonic central nervous system, especially for normal neural crest cell migration and normal axon guidance. Required for mammary gland differentiation, induction of milk proteins and lactation. Acts as cell-surface receptor for the neuregulins NRG1, NRG2, NRG3 and NRG4 and the EGF family members BTC, EREG and HBEGF. Ligand binding triggers receptor dimerization and autophosphorylation at specific tyrosine residues that then serve as binding sites for scaffold proteins and effectors. Ligand specificity and signaling is modulated by alternative splicing, proteolytic processing, and by the formation of heterodimers with other ERBB family members, thereby creating multiple combinations of intracellular phosphotyrosines that trigger ligand- and context-specific cellular responses. Mediates phosphorylation of SHC1 and activation of the MAP kinases MAPK1/ERK2 and MAPK3/ERK1. Isoform JM-A CYT-1 and isoform JM-B CYT-1 phosphorylate PIK3R1, leading to the activation of phosphatidylinositol 3-kinase and AKT1 and protect cells against apoptosis. Isoform JM-A CYT-1 and isoform JM-B CYT-1 mediate reorganization of the actin cytoskeleton and promote cell migration in response to NRG1. Isoform JM-A CYT-2 and isoform JM-B CYT-2 lack the phosphotyrosine that mediates interaction with PIK3R1, and hence do not phosphorylate PIK3R1, do not protect cells against apoptosis, and do not promote reorganization of the actin cytoskeleton and cell migration. Proteolytic processing of isoform JM-A CYT-1 and isoform JM-A CYT-2 gives rise to the corresponding soluble intracellular domains (4ICD) that translocate to the nucleus, promote nuclear import of STAT5A, activation of STAT5A, mammary epithelium differentiation, cell proliferation and activation of gene expression. The ERBB4 soluble intracellular domains (4ICD) colocalize with STAT5A at the CSN2 promoter to regulate transcription of milk proteins during lactation. The ERBB4 soluble intracellular domains can also translocate to mitochondria and promote apoptosis. The protein is Receptor tyrosine-protein kinase erbB-4 (Erbb4) of Mus musculus (Mouse).